A 664-amino-acid chain; its full sequence is MPSFKIVSDFALTGDQPQAVEKLAKGLVSGLTDQTLLGVTGSGKTFTMANVIARVNRPTLIISHNKTLAAQLYSEMKEFLPENSVEYFVSYYDYYQPEAYVPQKDMYIEKDSDINEEIDKLRHAATRALFERRDVVIVASVSCIYGLGEPEEYRSFVLPLKKGQSFRRDLILRRLVDMQYERNDLDFSRGKFRLRGDTLEIQPAYEELALRVEFFGDEIERIVSLDPVSGELLAGIEEINIYPAKHFVTSAEKMAEAIKSIQAELEDRLKELEAEGKMLEAARLKQRTNYDLEMMEQAGYCSGVENYSRHLAGRKAGSAPWTLLDYFPEDFLLIVDESHMSLPQIRGMYAGDSARKKTLVDYGFRLPSAMDNRPLSFDEFKARVKQAIYVSATPGPYEKEHSLQVVEQLVRPTGLLEPVMTVKPTVGQIDDLLEEVKKRVAKNERVLITTLTKKMSEKLADYLVEMGVKTHYLHSEVDTLERIEILRDLRLGVYDVIVGINLLREGLDLPEVSLVAILDADKEGYLRSEQALIQTMGRAARHVDGQVIMYADKITGSMQRAMDEIIRRRKIQEDYNRLHNITPQGIRKAIKDINERIRSVTAEVSGPEFRPTPTLREDIARLIKELESQMKKAAKNLEFERAALIRDRVVELRAALEIDPLGRK.

Residues 25 to 412 (KGLVSGLTDQ…LQVVEQLVRP (388 aa)) enclose the Helicase ATP-binding domain. Residue 38 to 45 (GVTGSGKT) participates in ATP binding. A Beta-hairpin motif is present at residues 91 to 114 (YYDYYQPEAYVPQKDMYIEKDSDI). A Helicase C-terminal domain is found at 428–594 (QIDDLLEEVK…GIRKAIKDIN (167 aa)). The UVR domain occupies 620–655 (ARLIKELESQMKKAAKNLEFERAALIRDRVVELRAA).

This sequence belongs to the UvrB family. As to quaternary structure, forms a heterotetramer with UvrA during the search for lesions. Interacts with UvrC in an incision complex.

Its subcellular location is the cytoplasm. In terms of biological role, the UvrABC repair system catalyzes the recognition and processing of DNA lesions. A damage recognition complex composed of 2 UvrA and 2 UvrB subunits scans DNA for abnormalities. Upon binding of the UvrA(2)B(2) complex to a putative damaged site, the DNA wraps around one UvrB monomer. DNA wrap is dependent on ATP binding by UvrB and probably causes local melting of the DNA helix, facilitating insertion of UvrB beta-hairpin between the DNA strands. Then UvrB probes one DNA strand for the presence of a lesion. If a lesion is found the UvrA subunits dissociate and the UvrB-DNA preincision complex is formed. This complex is subsequently bound by UvrC and the second UvrB is released. If no lesion is found, the DNA wraps around the other UvrB subunit that will check the other stand for damage. This Dehalococcoides mccartyi (strain CBDB1) protein is UvrABC system protein B.